We begin with the raw amino-acid sequence, 164 residues long: Disulfide bond formation protein B (164 aa).

Residues 1–9 lie on the Cytoplasmic side of the membrane; sequence MTLPSARTC. The chain crosses the membrane as a helical span at residues 10 to 26; sequence FLLGFLFCAALLAAALY. Over 27-44 the chain is Periplasmic; sequence FQFSGGLEPCPLCISQRI. Cys36 and Cys39 are oxidised to a cystine. The helical transmembrane segment at 45-61 threads the bilayer; sequence MVLAVALVFLAAAIHHP. The Cytoplasmic portion of the chain corresponds to 62-68; that stretch reads ASLGIRA. Residues 69–85 traverse the membrane as a helical segment; it reads YALLGTAVALGGASISG. Residues 86–142 lie on the Periplasmic side of the membrane; sequence RHVWLLHLPPEEVPECGPGLSYMFRNFPLGDTLKAMLSGTGDCAKVDWTFLGLSMPA. A disulfide bridge links Cys101 with Cys128. A helical transmembrane segment spans residues 143–161; the sequence is WVLICFLGLGAFSLLQWWN. The Cytoplasmic portion of the chain corresponds to 162–164; it reads AER.

The protein belongs to the DsbB family.

It is found in the cell inner membrane. Functionally, required for disulfide bond formation in some periplasmic proteins. Acts by oxidizing the DsbA protein. In Methylococcus capsulatus (strain ATCC 33009 / NCIMB 11132 / Bath), this protein is Disulfide bond formation protein B.